Here is a 427-residue protein sequence, read N- to C-terminus: Septin-6 (427 aa).

Alanine 2 carries the post-translational modification N-acetylalanine. Serine 27 carries the phosphoserine modification. A Septin-type G domain is found at 39–305 (QGFCFNILCV…ELYRRCKLEE (267 aa)). Residues 49–56 (GETGLGKS) form a G1 motif region. Residues 49–56 (GETGLGKS), glycine 104, 185–193 (KSDAISKSE), glycine 239, and arginine 254 each bind GTP. The tract at residues 101–104 (STVG) is G3 motif. Residues 184–187 (AKSD) are G4 motif. A coiled-coil region spans residues 321-416 (QETYEAKRNE…QSQGSQAGGS (96 aa)). Position 367 is an N6-acetyllysine (lysine 367). A disordered region spans residues 405 to 427 (LLQSQGSQAGGSQTLKRDKEKKN). Residues 407 to 417 (QSQGSQAGGSQ) show a composition bias toward low complexity. Serine 416 bears the Phosphoserine mark. Phosphothreonine is present on threonine 418.

This sequence belongs to the TRAFAC class TrmE-Era-EngA-EngB-Septin-like GTPase superfamily. Septin GTPase family. As to quaternary structure, septins polymerize into heterooligomeric protein complexes that form filaments, and associate with cellular membranes, actin filaments and microtubules. GTPase activity is required for filament formation. Filaments are assembled from asymmetrical heterotrimers, composed of SEPTIN2, SEPTIN6 and SEPTIN7 that associate head-to-head to form a hexameric unit. Within the trimer, directly interacts with SEPTIN2 and SEPTIN7. Also interacts with SEPTIN9 and SEPTIN12. Interaction with SEPTIN12 alters filament structure. Component of a septin core octameric complex consisting of SEPTIN12, SEPTIN7, SEPTIN6 and SEPTIN2 or SEPTIN4 in the order 12-7-6-2-2-6-7-12 or 12-7-6-4-4-6-7-12 and located in the sperm annulus. Interacts with SOCS7. Interacts with HNRNPA1.

The protein resides in the cytoplasm. It is found in the cytoskeleton. It localises to the spindle. Its subcellular location is the chromosome. The protein localises to the centromere. The protein resides in the kinetochore. It is found in the cleavage furrow. It localises to the midbody. Its subcellular location is the cell projection. The protein localises to the cilium. The protein resides in the flagellum. Functionally, filament-forming cytoskeletal GTPase. Required for normal organization of the actin cytoskeleton. Involved in cytokinesis. Forms a filamentous structure with SEPTIN12, SEPTIN6, SEPTIN2 and probably SEPTIN4 at the sperm annulus which is required for the structural integrity and motility of the sperm tail during postmeiotic differentiation. The polypeptide is Septin-6 (Bos taurus (Bovine)).